The sequence spans 547 residues: Sodium-coupled neutral amino acid transporter 4 (547 aa).

Residues 1–34 are disordered; it reads MDPMELNNVSIEPDGDSCSGDSIQDSYTGMENSD. Topologically, residues 1–104 are extracellular; it reads MDPMELNNVS…GLSYAMANTG (104 aa). The segment covering 19 to 31 has biased composition (polar residues); the sequence is SGDSIQDSYTGME. S49 carries the phosphoserine modification. A helical membrane pass occupies residues 105 to 125; the sequence is IILFIIMLLTVAILSLYSVHL. The Cytoplasmic segment spans residues 126–151; sequence LLKTAKEGGSLIYEKLGEKAFGWPGK. The chain crosses the membrane as a helical span at residues 152–172; the sequence is IGAFISITMQNIGAMSSYLFI. Topologically, residues 173–195 are extracellular; that stretch reads IKYELPEVIRAFMGLEENTGEWY. Residues 196–216 traverse the membrane as a helical segment; sequence LNGNYLVLFVSVGIILPLSLL. Over 217 to 220 the chain is Cytoplasmic; the sequence is KNLG. The chain crosses the membrane as a helical span at residues 221–241; sequence YLGYTSGFSLSCMVFFVSVVI. Residues 242–332 lie on the Extracellular side of the membrane; the sequence is YKKFQIPCPL…PKYFVFNSRT (91 aa). A disulfide bridge links C249 with C321. 3 N-linked (GlcNAc...) asparagine glycosylation sites follow: N260, N264, and N276. Residues 333–353 form a helical membrane-spanning segment; that stretch reads AYAIPILAFAFVCHPEVLPIY. Over 354–369 the chain is Cytoplasmic; sequence SELKDRSRRKMQTVSN. A helical membrane pass occupies residues 370–390; it reads ISISGMLVMYLLAALFGYLSF. The Extracellular segment spans residues 391–411; sequence YGDVEDELLHAYSKVYTFDTA. The chain crosses the membrane as a helical span at residues 412–432; it reads LLMVRLAVLVAVTLTVPIVLF. The Cytoplasmic segment spans residues 433-453; that stretch reads PIRTSVITLLFPRKPFSWLKH. A helical transmembrane segment spans residues 454 to 474; sequence FGIAAIIIALNNILVILVPTI. The Extracellular portion of the chain corresponds to 475 to 476; that stretch reads KY. The chain crosses the membrane as a helical span at residues 477 to 497; it reads IFGFIGASSATMLIFILPAAF. Residues 498–514 are Cytoplasmic-facing; the sequence is YLKLVKKEPLRSPQKIG. A helical membrane pass occupies residues 515–535; sequence ALVFLVTGIIFMMGSMALIIL. The Extracellular segment spans residues 536–547; sequence DWIYNPPNPNHH.

It belongs to the amino acid/polyamine transporter 2 family. The disulfide bond plays an important role in substrate transport, but has no effect on trafficking to the cell surface. Detected in liver, in hepatocytes surrounding the central vein. Not detected in heart, kidney, brain, lung, small intestine, spleen and thymus. Highly expressed in placenta.

Its subcellular location is the cell membrane. The protein localises to the cell projection. It localises to the microvillus membrane. It catalyses the reaction L-alanine(in) + Na(+)(in) = L-alanine(out) + Na(+)(out). The catalysed reaction is L-methionine(in) + Na(+)(in) = L-methionine(out) + Na(+)(out). It carries out the reaction L-asparagine(in) + Na(+)(in) = L-asparagine(out) + Na(+)(out). The enzyme catalyses L-threonine(in) + Na(+)(in) = L-threonine(out) + Na(+)(out). It catalyses the reaction L-serine(in) + Na(+)(in) = L-serine(out) + Na(+)(out). The catalysed reaction is glycine(in) + Na(+)(in) = glycine(out) + Na(+)(out). It carries out the reaction L-glutamine(in) + Na(+)(in) = L-glutamine(out) + Na(+)(out). The enzyme catalyses L-histidine(in) + Na(+)(in) = L-histidine(out) + Na(+)(out). It catalyses the reaction L-cysteine(in) + Na(+)(in) = L-cysteine(out) + Na(+)(out). The catalysed reaction is L-proline(in) + Na(+)(in) = L-proline(out) + Na(+)(out). Its function is as follows. Symporter that cotransports neutral amino acids and sodium ions from the extraccellular to the intracellular side of the cell membrane. The transport is electrogenic, pH dependent and partially tolerates substitution of Na(+) by Li(+). Preferentially transports smaller amino acids, such as glycine, L-alanine, L-serine, L-asparagine and L-threonine, followed by L-cysteine, L-histidine, L-proline and L-glutamine and L-methionine. This Mus musculus (Mouse) protein is Sodium-coupled neutral amino acid transporter 4.